The primary structure comprises 616 residues: Dihydroxy-acid dehydratase (616 aa).

Residue aspartate 81 participates in Mg(2+) binding. Cysteine 122 is a [2Fe-2S] cluster binding site. Aspartate 123 and lysine 124 together coordinate Mg(2+). Lysine 124 carries the N6-carboxylysine modification. Cysteine 195 lines the [2Fe-2S] cluster pocket. Glutamate 491 contributes to the Mg(2+) binding site. Residue serine 517 is the Proton acceptor of the active site.

This sequence belongs to the IlvD/Edd family. As to quaternary structure, homodimer. The cofactor is [2Fe-2S] cluster. Mg(2+) is required as a cofactor.

The enzyme catalyses (2R)-2,3-dihydroxy-3-methylbutanoate = 3-methyl-2-oxobutanoate + H2O. The catalysed reaction is (2R,3R)-2,3-dihydroxy-3-methylpentanoate = (S)-3-methyl-2-oxopentanoate + H2O. Its pathway is amino-acid biosynthesis; L-isoleucine biosynthesis; L-isoleucine from 2-oxobutanoate: step 3/4. The protein operates within amino-acid biosynthesis; L-valine biosynthesis; L-valine from pyruvate: step 3/4. Functions in the biosynthesis of branched-chain amino acids. Catalyzes the dehydration of (2R,3R)-2,3-dihydroxy-3-methylpentanoate (2,3-dihydroxy-3-methylvalerate) into 2-oxo-3-methylpentanoate (2-oxo-3-methylvalerate) and of (2R)-2,3-dihydroxy-3-methylbutanoate (2,3-dihydroxyisovalerate) into 2-oxo-3-methylbutanoate (2-oxoisovalerate), the penultimate precursor to L-isoleucine and L-valine, respectively. The sequence is that of Dihydroxy-acid dehydratase from Shewanella loihica (strain ATCC BAA-1088 / PV-4).